The chain runs to 242 residues: N-alpha-acetyltransferase 60 (242 aa).

Residues Met-1–Asp-192 are Cytoplasmic-facing. The N-acetyltransferase domain maps to Thr-13–Asn-182. Tyr-38 is a binding site for substrate. Tyr-97 is an active-site residue. Leu-99 lines the substrate pocket. Acetyl-CoA-binding positions include Leu-101–Val-103 and Lys-109–Ser-114. The active site involves His-138. Acetyl-CoA-binding positions include Asn-143 and Tyr-150–Arg-153. Positions Pro-162–Asp-173 are required for homodimerization. Tyr-165 provides a ligand contact to substrate. Positions Tyr-193–Ile-236 form an intramembrane region, helical. At Glu-237–Met-242 the chain is on the cytoplasmic side.

This sequence belongs to the acetyltransferase family. NAA60 subfamily. Monomer and homodimer; monomer in presence of substrate and homodimer in its absence.

Its subcellular location is the golgi apparatus membrane. The catalysed reaction is N-terminal L-methionyl-[transmembrane protein] + acetyl-CoA = N-terminal N(alpha)-acetyl-L-methionyl-[transmembrane protein] + CoA + H(+). It carries out the reaction L-lysyl-[protein] + acetyl-CoA = N(6)-acetyl-L-lysyl-[protein] + CoA + H(+). Its function is as follows. N-alpha-acetyltransferase that specifically mediates the acetylation of N-terminal residues of the transmembrane proteins, with a strong preference for N-termini facing the cytosol. Displays N-terminal acetyltransferase activity towards a range of N-terminal sequences including those starting with Met-Lys, Met-Val, Met-Ala and Met-Met. Required for normal chromosomal segregation during anaphase. May also show histone acetyltransferase activity; such results are however unclear in vivo and would require additional experimental evidences. This chain is N-alpha-acetyltransferase 60 (naa60), found in Xenopus tropicalis (Western clawed frog).